The chain runs to 292 residues: 4-hydroxy-tetrahydrodipicolinate synthase (292 aa).

T45 lines the pyruvate pocket. Residue Y133 is the Proton donor/acceptor of the active site. Residue K161 is the Schiff-base intermediate with substrate of the active site. I203 contacts pyruvate.

It belongs to the DapA family. In terms of assembly, homotetramer; dimer of dimers.

It localises to the cytoplasm. It catalyses the reaction L-aspartate 4-semialdehyde + pyruvate = (2S,4S)-4-hydroxy-2,3,4,5-tetrahydrodipicolinate + H2O + H(+). Its pathway is amino-acid biosynthesis; L-lysine biosynthesis via DAP pathway; (S)-tetrahydrodipicolinate from L-aspartate: step 3/4. Catalyzes the condensation of (S)-aspartate-beta-semialdehyde [(S)-ASA] and pyruvate to 4-hydroxy-tetrahydrodipicolinate (HTPA). The chain is 4-hydroxy-tetrahydrodipicolinate synthase from Shigella dysenteriae serotype 1 (strain Sd197).